Consider the following 173-residue polypeptide: Transcription factor E (173 aa).

The region spanning alanine 9–tyrosine 92 is the HTH TFE/IIEalpha-type domain.

It belongs to the TFE family. In terms of assembly, monomer. Interaction with RNA polymerase subunits RpoF and RpoE is necessary for Tfe stimulatory transcription activity. Able to interact with Tbp and RNA polymerase in the absence of DNA promoter. Interacts both with the preinitiation and elongation complexes.

Transcription factor that plays a role in the activation of archaeal genes transcribed by RNA polymerase. Facilitates transcription initiation by enhancing TATA-box recognition by TATA-box-binding protein (Tbp), and transcription factor B (Tfb) and RNA polymerase recruitment. Not absolutely required for transcription in vitro, but particularly important in cases where Tbp or Tfb function is not optimal. It dynamically alters the nucleic acid-binding properties of RNA polymerases by stabilizing the initiation complex and destabilizing elongation complexes. Seems to translocate with the RNA polymerase following initiation and acts by binding to the non template strand of the transcription bubble in elongation complexes. The chain is Transcription factor E from Methanospirillum hungatei JF-1 (strain ATCC 27890 / DSM 864 / NBRC 100397 / JF-1).